The chain runs to 558 residues: Acylase ACY 1 proenzyme (558 aa).

T368 (nucleophile) is an active-site residue.

The protein belongs to the gamma-glutamyltransferase family. As to quaternary structure, dimer of two non-identical chains processed from the same precursor.

The catalysed reaction is (7R)-7-(4-carboxybutanamido)cephalosporanate + H2O = (7R)-7-aminocephalosporanate + glutarate. It catalyses the reaction an N-terminal (5-L-glutamyl)-[peptide] + an alpha-amino acid = 5-L-glutamyl amino acid + an N-terminal L-alpha-aminoacyl-[peptide]. It carries out the reaction glutathione + H2O = L-cysteinylglycine + L-glutamate. The enzyme catalyses an S-substituted glutathione + H2O = an S-substituted L-cysteinylglycine + L-glutamate. Functionally, besides the cephalosporin acylase I activity which converts GL-7ACA into 7-ACA; this enzyme displays some gamma glutamyltranspeptidase activity. In Pseudomonas sp. (strain SE83), this protein is Acylase ACY 1 proenzyme (acyI).